A 346-amino-acid polypeptide reads, in one-letter code: Ribosomal RNA small subunit methyltransferase H (346 aa).

S-adenosyl-L-methionine is bound by residues 47 to 49 (GGY), aspartate 65, phenylalanine 92, aspartate 113, and glutamine 120. Over residues 270–279 (RGEAPSRRLP) the composition is skewed to basic and acidic residues. Residues 270-346 (RGEAPSRRLP…ALPQRAAKGR (77 aa)) are disordered.

The protein belongs to the methyltransferase superfamily. RsmH family.

It is found in the cytoplasm. It carries out the reaction cytidine(1402) in 16S rRNA + S-adenosyl-L-methionine = N(4)-methylcytidine(1402) in 16S rRNA + S-adenosyl-L-homocysteine + H(+). In terms of biological role, specifically methylates the N4 position of cytidine in position 1402 (C1402) of 16S rRNA. The polypeptide is Ribosomal RNA small subunit methyltransferase H (Methylocella silvestris (strain DSM 15510 / CIP 108128 / LMG 27833 / NCIMB 13906 / BL2)).